Reading from the N-terminus, the 509-residue chain is Cobyric acid synthase (509 aa).

In terms of domain architecture, GATase cobBQ-type spans 262–459; the sequence is EIKVGIIKLP…IHGIFENDSW (198 aa). Catalysis depends on Cys-343, which acts as the Nucleophile. His-451 is an active-site residue.

It belongs to the CobB/CobQ family. CobQ subfamily.

Its pathway is cofactor biosynthesis; adenosylcobalamin biosynthesis. In terms of biological role, catalyzes amidations at positions B, D, E, and G on adenosylcobyrinic A,C-diamide. NH(2) groups are provided by glutamine, and one molecule of ATP is hydrogenolyzed for each amidation. The sequence is that of Cobyric acid synthase from Prochlorococcus marinus (strain MIT 9215).